The primary structure comprises 179 residues: MSRIGKSPVQIPDKVSVDINGLTITVKGPKGELKRLMPEGVDFVQKENQIVVTPSTTKRYSRERHGLCRTLISNMVQGVTDGYSKKLEIVGVGSRAQVKGKTLVVSAGYSHPVEMTPPDGITYKVESNTNVTVSGIDKEIVGNEAAKIRSIRPPEPYKGKGIKYQDERIIRKAGKSGKK.

This sequence belongs to the universal ribosomal protein uL6 family. Part of the 50S ribosomal subunit.

In terms of biological role, this protein binds to the 23S rRNA, and is important in its secondary structure. It is located near the subunit interface in the base of the L7/L12 stalk, and near the tRNA binding site of the peptidyltransferase center. This is Large ribosomal subunit protein uL6 from Prochlorococcus marinus (strain MIT 9515).